The sequence spans 457 residues: MPAMVLLLCLALGPALRSARCESTEEYDYDYLSINKTWVLTPKAQETDATQILNSLLKNYDNKLRPDIGIKPTFIDVDIYVNSIGPVSVIQMEYTIDIFFAQTWYDRRLRFNSTLKALTLNTNMVSRIWIPDTFFRNSKRADSHWITTPNQLLRIWNDGKVLYTLRLTIEAECLLQLQNFPMDTHSCPLVFSSYGYPREEIVYRWRRYSIEVSDQRTWRLYQFDFTGLRNTSEVLRTGAGEYMVMTVSFDLSRRMGYFAIQTYIPCILTVVLSWVSFWIKRDSTPARTSLGITTVLTMTTLSTISRKHLPRVSYITAMDLFVSVCFIFVFAALMEYATLNYLVGNKKPLEHSSRKARLPPAGAQVMPSFTAINININNIMHWPPEIEEDEDDDPGSPCLEGKECERFFCCIEDCQTGMWREGRVRIHISRLDSYSRVFFPTAFLLFNIVYWIAYLYL.

A signal peptide spans 1–21 (MPAMVLLLCLALGPALRSARC). Residues 22–256 (ESTEEYDYDY…VSFDLSRRMG (235 aa)) lie on the Extracellular side of the membrane. N-linked (GlcNAc...) asparagine glycans are attached at residues asparagine 35 and asparagine 112. Cysteine 173 and cysteine 187 are oxidised to a cystine. N-linked (GlcNAc...) asparagine glycosylation occurs at asparagine 230. Helical transmembrane passes span 257 to 279 (YFAIQTYIPCILTVVLSWVSFWI), 283 to 305 (STPARTSLGITTVLTMTTLSTIS), and 317 to 339 (AMDLFVSVCFIFVFAALMEYATL). At 340–433 (NYLVGNKKPL…VRIHISRLDS (94 aa)) the chain is on the cytoplasmic side. Residues 434–457 (YSRVFFPTAFLLFNIVYWIAYLYL) traverse the membrane as a helical segment.

Belongs to the ligand-gated ion channel (TC 1.A.9) family. Gamma-aminobutyric acid receptor (TC 1.A.9.5) subfamily. GABRG4 sub-subfamily. As to quaternary structure, generally pentameric. There are five types of GABA(A) receptor chains: alpha, beta, gamma, delta, and rho. Abundant in several brain regions, including the ectostriatum, nucleus rotundus and hyperstriatum ventrale.

The protein resides in the postsynaptic cell membrane. It localises to the cell membrane. In terms of biological role, GABA, the major inhibitory neurotransmitter in the vertebrate brain, mediates neuronal inhibition by binding to the GABA/benzodiazepine receptor and opening an integral chloride channel. This Gallus gallus (Chicken) protein is Gamma-aminobutyric acid receptor subunit gamma-4 (GABRG4).